The primary structure comprises 709 residues: Alpha-1,2-mannosyltransferase MNN24 (709 aa).

The Cytoplasmic portion of the chain corresponds to 1 to 9; sequence MFSIPVSSK. The helical transmembrane segment at 10–30 threads the bilayer; the sequence is TVRLILVSLLLITLINILAAF. The Extracellular portion of the chain corresponds to 31–709; the sequence is QRSTLSSWFP…KNHIEFLEIS (679 aa). Residue asparagine 317 is glycosylated (N-linked (GlcNAc...) asparagine).

Belongs to the MNN1/MNT family.

It is found in the golgi apparatus membrane. It participates in protein modification; protein glycosylation. In terms of biological role, alpha-1,2-mannosyltransferase required for cell wall integrity. Responsible for addition of the first alpha-1,2-linked mannose to form the branches on the mannan backbone of oligosaccharides. Addition of alpha-1,2-mannose is required for stabilization of the alpha-1,6-mannose backbone and hence regulates mannan fibril length; and is important for both immune recognition and virulence. The chain is Alpha-1,2-mannosyltransferase MNN24 (MNN24) from Candida albicans (strain SC5314 / ATCC MYA-2876) (Yeast).